The primary structure comprises 136 residues: Gilles de la Tourette syndrome chromosomal region candidate gene 1 protein (136 aa).

Residues 73–93 traverse the membrane as a helical segment; that stretch reads AICMEVFLFLWFIAPIYACVC.

It is found in the membrane. The protein is Gilles de la Tourette syndrome chromosomal region candidate gene 1 protein (GTSCR1) of Homo sapiens (Human).